Here is a 308-residue protein sequence, read N- to C-terminus: Putative mitochondrial transporter UCP3 (308 aa).

Residues Met-1–Pro-10 are Mitochondrial intermembrane-facing. A helical transmembrane segment spans residues Pro-11–Phe-32. 3 Solcar repeats span residues Pro-11–Phe-102, Ser-111–Lys-202, and Asp-211–Ala-296. Over Pro-33–Ser-73 the chain is Mitochondrial matrix. A helical membrane pass occupies residues Pro-74–Tyr-96. The Mitochondrial intermembrane portion of the chain corresponds to Asp-97–Arg-116. Residues Ile-117–Pro-133 form a helical membrane-spanning segment. Residues Thr-134 to Trp-179 lie on the Mitochondrial matrix side of the membrane. A helical membrane pass occupies residues Pro-180–Tyr-196. Topologically, residues Asp-197–Phe-213 are mitochondrial intermembrane. A helical transmembrane segment spans residues Pro-214–Pro-233. At Val-234–Ala-267 the chain is on the mitochondrial matrix side. Residues Phe-268 to Tyr-290 form a helical membrane-spanning segment. The tract at residues Ser-275 to Leu-297 is purine nucleotide binding. Over Glu-291 to Phe-308 the chain is Mitochondrial intermembrane.

This sequence belongs to the mitochondrial carrier (TC 2.A.29) family. As to quaternary structure, interacts with HAX1; the interaction is direct and calcium-dependent.

It is found in the mitochondrion inner membrane. With respect to regulation, inhibited by purine nucleotides and inorganic phosphate (in vitro). Its function is as follows. Putative transmembrane transporter that plays a role in mitochondrial metabolism via an as yet unclear mechanism. Originally, this mitochondrial protein was thought to act as a proton transmembrane transporter from the mitochondrial intermembrane space into the matrix, causing proton leaks through the inner mitochondrial membrane, thereby uncoupling mitochondrial membrane potential generation from ATP synthesis. However, this function is controversial and uncoupling may not be the function, or at least not the main function, but rather a consequence of more conventional metabolite transporter activity. The sequence is that of Putative mitochondrial transporter UCP3 from Mus musculus (Mouse).